Here is a 346-residue protein sequence, read N- to C-terminus: Protein RecA (346 aa).

65–72 (GPESSGKT) provides a ligand contact to ATP.

This sequence belongs to the RecA family.

Its subcellular location is the cytoplasm. In terms of biological role, can catalyze the hydrolysis of ATP in the presence of single-stranded DNA, the ATP-dependent uptake of single-stranded DNA by duplex DNA, and the ATP-dependent hybridization of homologous single-stranded DNAs. It interacts with LexA causing its activation and leading to its autocatalytic cleavage. The protein is Protein RecA of Enterococcus hirae (strain ATCC 9790 / DSM 20160 / JCM 8729 / LMG 6399 / NBRC 3181 / NCIMB 6459 / NCDO 1258 / NCTC 12367 / WDCM 00089 / R).